The primary structure comprises 364 residues: D-alanine--D-alanine ligase (364 aa).

Residues 145–354 (KMAFEQAGLP…FPELVDKLVQ (210 aa)) form the ATP-grasp domain. 181-236 (EASLGYPCFVKPANLGSSVGISKVRSRQELEDALDNAANYDRRIIIEAGVAAREVE) contributes to the ATP binding site. Residues aspartate 307, glutamate 321, and asparagine 323 each contribute to the Mg(2+) site.

Belongs to the D-alanine--D-alanine ligase family. The cofactor is Mg(2+). Requires Mn(2+) as cofactor.

It is found in the cytoplasm. The catalysed reaction is 2 D-alanine + ATP = D-alanyl-D-alanine + ADP + phosphate + H(+). Its pathway is cell wall biogenesis; peptidoglycan biosynthesis. Functionally, cell wall formation. This is D-alanine--D-alanine ligase from Nostoc sp. (strain PCC 7120 / SAG 25.82 / UTEX 2576).